Reading from the N-terminus, the 297-residue chain is Proline iminopeptidase (297 aa).

Residues Val-26–Ser-131 form the AB hydrolase-1 domain. Ser-103 (nucleophile) is an active-site residue. The active site involves Asp-243. His-270 (proton donor) is an active-site residue.

It belongs to the peptidase S33 family. As to quaternary structure, monomer.

The catalysed reaction is Release of N-terminal proline from a peptide.. Releases the N-terminal proline from various substrates. In Flavobacterium johnsoniae (strain ATCC 17061 / DSM 2064 / JCM 8514 / BCRC 14874 / CCUG 350202 / NBRC 14942 / NCIMB 11054 / UW101) (Cytophaga johnsonae), this protein is Proline iminopeptidase (fpaP).